We begin with the raw amino-acid sequence, 136 residues long: Small ribosomal subunit protein uS9 (136 aa).

The segment at 97 to 136 (SPDNRKPLKTEGHLSRDPRAKERRKYGLKKARKAPQFSKR) is disordered. Positions 98-116 (PDNRKPLKTEGHLSRDPRA) are enriched in basic and acidic residues. The span at 117-136 (KERRKYGLKKARKAPQFSKR) shows a compositional bias: basic residues.

Belongs to the universal ribosomal protein uS9 family.

This Prochlorococcus marinus (strain MIT 9215) protein is Small ribosomal subunit protein uS9.